Consider the following 658-residue polypeptide: Threonine--tRNA ligase (658 aa).

In terms of domain architecture, TGS spans 1 to 64 (MSNTVSLQFP…GASGKVEIIT (64 aa)). The catalytic stretch occupies residues 246–548 (DHRRLGREMD…LIENFAGHMP (303 aa)). 3 residues coordinate Zn(2+): cysteine 343, histidine 394, and histidine 525.

The protein belongs to the class-II aminoacyl-tRNA synthetase family. Homodimer. It depends on Zn(2+) as a cofactor.

The protein localises to the cytoplasm. It catalyses the reaction tRNA(Thr) + L-threonine + ATP = L-threonyl-tRNA(Thr) + AMP + diphosphate + H(+). Its function is as follows. Catalyzes the attachment of threonine to tRNA(Thr) in a two-step reaction: L-threonine is first activated by ATP to form Thr-AMP and then transferred to the acceptor end of tRNA(Thr). Also edits incorrectly charged L-seryl-tRNA(Thr). This is Threonine--tRNA ligase from Brucella canis (strain ATCC 23365 / NCTC 10854 / RM-666).